Reading from the N-terminus, the 325-residue chain is Acetyl-coenzyme A carboxylase carboxyl transferase subunit alpha (325 aa).

The CoA carboxyltransferase C-terminal domain maps to 35 to 292; sequence EIEKLEARLA…DRVLRRSLKQ (258 aa).

It belongs to the AccA family. As to quaternary structure, acetyl-CoA carboxylase is a heterohexamer composed of biotin carboxyl carrier protein (AccB), biotin carboxylase (AccC) and two subunits each of ACCase subunit alpha (AccA) and ACCase subunit beta (AccD).

The protein resides in the cytoplasm. It catalyses the reaction N(6)-carboxybiotinyl-L-lysyl-[protein] + acetyl-CoA = N(6)-biotinyl-L-lysyl-[protein] + malonyl-CoA. It functions in the pathway lipid metabolism; malonyl-CoA biosynthesis; malonyl-CoA from acetyl-CoA: step 1/1. Its function is as follows. Component of the acetyl coenzyme A carboxylase (ACC) complex. First, biotin carboxylase catalyzes the carboxylation of biotin on its carrier protein (BCCP) and then the CO(2) group is transferred by the carboxyltransferase to acetyl-CoA to form malonyl-CoA. In Geobacillus kaustophilus (strain HTA426), this protein is Acetyl-coenzyme A carboxylase carboxyl transferase subunit alpha.